A 721-amino-acid polypeptide reads, in one-letter code: Probable acyl-activating enzyme 17, peroxisomal (721 aa).

A Microbody targeting signal motif is present at residues 719-721 (SKL).

This sequence belongs to the ATP-dependent AMP-binding enzyme family. Expressed in leaves, stems and developing seeds.

Its subcellular location is the peroxisome. May act as an acid--thiol ligase that activates carboxylic acids by forming acyl-CoAs. The sequence is that of Probable acyl-activating enzyme 17, peroxisomal (AAE17) from Arabidopsis thaliana (Mouse-ear cress).